The sequence spans 24 residues: Brevinin-1Lb (24 aa).

A disulfide bond links Cys-18 and Cys-24.

In terms of tissue distribution, expressed by the skin glands.

The protein localises to the secreted. Antibacterial activity against Gram-positive bacterium S.aureus and Gram-negative bacterium E.coli. The sequence is that of Brevinin-1Lb from Rana luteiventris (Columbia spotted frog).